Here is a 703-residue protein sequence, read N- to C-terminus: Fanconi anemia group B protein homolog (703 aa).

Belongs to the multisubunit FA complex composed of FANCA, FANCB, FANCC, FANCE, FANCF, FANCG, FANCL/PHF9 and FANCM.

Its subcellular location is the nucleus. Its function is as follows. DNA repair protein required for FANCD2 ubiquitination. The protein is Fanconi anemia group B protein homolog (Fancb) of Mus musculus (Mouse).